Reading from the N-terminus, the 212-residue chain is Pyrrolidone-carboxylate peptidase (212 aa).

Active-site residues include E78, C141, and H165.

Belongs to the peptidase C15 family. As to quaternary structure, homotetramer.

The protein resides in the cytoplasm. It carries out the reaction Release of an N-terminal pyroglutamyl group from a polypeptide, the second amino acid generally not being Pro.. Removes 5-oxoproline from various penultimate amino acid residues except L-proline. This is Pyrrolidone-carboxylate peptidase (pcp) from Staphylococcus aureus.